The sequence spans 200 residues: Pyridoxal 5'-phosphate synthase subunit PdxT (200 aa).

Residue 52–54 (GES) participates in L-glutamine binding. Cys-84 (nucleophile) is an active-site residue. Residues Arg-116 and 145–146 (IR) contribute to the L-glutamine site. Residues His-181 and Glu-183 each act as charge relay system in the active site.

This sequence belongs to the glutaminase PdxT/SNO family. In terms of assembly, in the presence of PdxS, forms a dodecamer of heterodimers. Only shows activity in the heterodimer.

The enzyme catalyses aldehydo-D-ribose 5-phosphate + D-glyceraldehyde 3-phosphate + L-glutamine = pyridoxal 5'-phosphate + L-glutamate + phosphate + 3 H2O + H(+). The catalysed reaction is L-glutamine + H2O = L-glutamate + NH4(+). Its pathway is cofactor biosynthesis; pyridoxal 5'-phosphate biosynthesis. Its function is as follows. Catalyzes the hydrolysis of glutamine to glutamate and ammonia as part of the biosynthesis of pyridoxal 5'-phosphate. The resulting ammonia molecule is channeled to the active site of PdxS. The chain is Pyridoxal 5'-phosphate synthase subunit PdxT from Saccharolobus solfataricus (strain ATCC 35092 / DSM 1617 / JCM 11322 / P2) (Sulfolobus solfataricus).